A 686-amino-acid polypeptide reads, in one-letter code: Secretin GspD 2 (686 aa).

An N-terminal signal peptide occupies residues 1 to 40 (MFWRDITLSVWRKKTTGLKTKKRLLPLVLAAALCSSPVWA). The segment at 41–140 (EEATFTANFK…VGEGSDNYAG (100 aa)) is N0, contacts GspC2. The tract at residues 142–206 (EMVTKVVPVR…EVIQRVDHAG (65 aa)) is N1. Positions 207-279 (NRTEEVIPLD…LIRRLDSEME (73 aa)) are N2. Residues 282-357 (GNSQVFYLKY…SLQSVIEQLD (76 aa)) are N3. The segment at 360–627 (RAQVHVEALI…VFIRPTILRD (268 aa)) is secretin. The cap gate stretch occupies residues 414 to 433 (PQKGSTVISENGATTINPDT). A s domain, contacts AspS2 region spans residues 629 to 686 (MAADGVSQRKYNYMRAEQIYRDEQGLSLMPHTAQPVLPAQNQALPPEVRAFLNAGRTR).

This sequence belongs to the bacterial secretin family. GSP D subfamily. Forms a cylindrical channel with 15 subunits, each of which interacts with the surrounding pilotin AspS2 proteins (also called GspS-beta). Interacts with inner cell membrane protein GspC2 in the periplasm. Forms multimers in the outer membrane. The isolated N0 domain forms dimers that self-assemble into rings.

It localises to the cell outer membrane. Its function is as follows. Part of a type II secretion system (T2SS, formerly general secretion pathway, GSP) for the export of folded proteins across the outer membrane. This subunit forms the outer membrane channel. This chain is Secretin GspD 2 (gspD2), found in Escherichia coli O78:H11 (strain H10407 / ETEC).